A 745-amino-acid chain; its full sequence is Polyribonucleotide nucleotidyltransferase (745 aa).

2 residues coordinate Mg(2+): aspartate 487 and aspartate 493. The KH domain occupies 554-613 (PSTTTIKIDKDKIRDIIGPGGKVIKEICEISGAKIDISDDGTVSIYASDRDKLKVALDKI). The region spanning 623–691 (GEIFNGTVMK…NKGKAKLTIK (69 aa)) is the S1 motif domain. Residues 691–745 (KNADKDKSSNNTKPKTNAKDNSEPEQRRDSSKKRAWNEDNNAETAEVITERKYFN) form a disordered region. Basic and acidic residues predominate over residues 707 to 719 (NAKDNSEPEQRRD).

This sequence belongs to the polyribonucleotide nucleotidyltransferase family. The cofactor is Mg(2+).

Its subcellular location is the cytoplasm. The catalysed reaction is RNA(n+1) + phosphate = RNA(n) + a ribonucleoside 5'-diphosphate. Involved in mRNA degradation. Catalyzes the phosphorolysis of single-stranded polyribonucleotides processively in the 3'- to 5'-direction. This is Polyribonucleotide nucleotidyltransferase from Rickettsia massiliae (strain Mtu5).